Here is a 388-residue protein sequence, read N- to C-terminus: Succinate--CoA ligase [ADP-forming] subunit beta (388 aa).

The ATP-grasp domain maps to 9-244 (KQLFAEFGLP…PSQEDEREAH (236 aa)). ATP-binding positions include K46, 53–55 (GRG), E99, S102, and E107. Residues N199 and D213 each contribute to the Mg(2+) site. Substrate is bound by residues N264 and 321–323 (GIV).

It belongs to the succinate/malate CoA ligase beta subunit family. As to quaternary structure, heterotetramer of two alpha and two beta subunits. The cofactor is Mg(2+).

It catalyses the reaction succinate + ATP + CoA = succinyl-CoA + ADP + phosphate. The enzyme catalyses GTP + succinate + CoA = succinyl-CoA + GDP + phosphate. Its pathway is carbohydrate metabolism; tricarboxylic acid cycle; succinate from succinyl-CoA (ligase route): step 1/1. Its function is as follows. Succinyl-CoA synthetase functions in the citric acid cycle (TCA), coupling the hydrolysis of succinyl-CoA to the synthesis of either ATP or GTP and thus represents the only step of substrate-level phosphorylation in the TCA. The beta subunit provides nucleotide specificity of the enzyme and binds the substrate succinate, while the binding sites for coenzyme A and phosphate are found in the alpha subunit. This chain is Succinate--CoA ligase [ADP-forming] subunit beta, found in Vibrio atlanticus (strain LGP32) (Vibrio splendidus (strain Mel32)).